The following is a 298-amino-acid chain: MKQKTIGKAVEIVGIGLHKGVPVHLVLEPLPENSGLVFFRRDLGVSIPLEPKNVIDTTMATVIGKEGAKISTIEHLLSAIYAYGIDNLKISLDNEEAPIMDGSSIGFCMLLDEAGIVSQNAPKRAIKIKSPIEVKDGEKFVRVEPSEVSLFDFSIEFDHPAIREQSYRFTFSTKAYKEEIARARTFGFVHEVQYLRSKGLALGGSLANAIVLDETGILNKEGLRYKEEFVRHKILDAIGDMALLGIPLIGTYVSYAGSHKLNHLLTKELLKEEESYEIVSLEDEAEAIEIEKVYATGE.

His-75, His-232, and Asp-236 together coordinate Zn(2+). His-259 functions as the Proton donor in the catalytic mechanism.

It belongs to the LpxC family. The cofactor is Zn(2+).

It carries out the reaction a UDP-3-O-[(3R)-3-hydroxyacyl]-N-acetyl-alpha-D-glucosamine + H2O = a UDP-3-O-[(3R)-3-hydroxyacyl]-alpha-D-glucosamine + acetate. The protein operates within glycolipid biosynthesis; lipid IV(A) biosynthesis; lipid IV(A) from (3R)-3-hydroxytetradecanoyl-[acyl-carrier-protein] and UDP-N-acetyl-alpha-D-glucosamine: step 2/6. Its function is as follows. Catalyzes the hydrolysis of UDP-3-O-myristoyl-N-acetylglucosamine to form UDP-3-O-myristoylglucosamine and acetate, the committed step in lipid A biosynthesis. In Wolinella succinogenes (strain ATCC 29543 / DSM 1740 / CCUG 13145 / JCM 31913 / LMG 7466 / NCTC 11488 / FDC 602W) (Vibrio succinogenes), this protein is UDP-3-O-acyl-N-acetylglucosamine deacetylase.